Consider the following 118-residue polypeptide: DNA-binding protein MmarC6_0793 (118 aa).

A compositionally biased stretch (basic and acidic residues) spans 1–12 (MNPEEIRQRRLQ). The interval 1 to 33 (MNPEEIRQRRLQEMQAKAQEQGAQDPEAQRQMQ) is disordered. The segment covering 24–33 (QDPEAQRQMQ) has biased composition (low complexity).

The protein belongs to the PDCD5 family.

This is DNA-binding protein MmarC6_0793 from Methanococcus maripaludis (strain C6 / ATCC BAA-1332).